We begin with the raw amino-acid sequence, 284 residues long: N-acylphosphatidylethanolamine synthase (284 aa).

The chain crosses the membrane as a helical span at residues 21–37 (TVIMAVSAFAKAVANLC). Positions 67 to 72 (HMSTLD) match the HXXXXD motif motif. The hydrophilic stretch occupies residues 122–163 (GGGIYQENMNEALQRLKDGSWLHTFPEGKVFQDDVPIRRLKW).

This sequence belongs to the taffazin family. In terms of tissue distribution, essentially present in young tissues. Expressed in roots, cotyledons, leaves, and shoot and root apical meristems.

Its subcellular location is the cell membrane. Acyltransferase that catalyzes the N-acylation of phosphatidylethanolamine to form N-acylphosphatidylethanolamine (N-acyl-PE) (e.g. NAPEs containing C16:0, C16:1, C18:0, and C18:1). Also mediates the formation of acylphosphatidylglycerol (acyl-PG) from lysoglycerophospholipid by O-acylation. Uses acyl-CoA as acyl donors. Acylates 1-acyllysophosphatidylethanolamine (1-acyllyso-PE) and 1-acyllysophosphatidylglycerol (1-acyllyso-PG) at the sn-2-position. The chain is N-acylphosphatidylethanolamine synthase from Arabidopsis thaliana (Mouse-ear cress).